The chain runs to 132 residues: MVMTDPIADMLTRIRNANMVRHEKVEIPASTIKKEIARILKEEGFIRDAEFVEDNKQGIIRVFLKYGAGNERVITGLKRISKPGLRVYAKNNEVPKVLGGLGCAIISTSTGVMTDKQARQAHVGGEVLAYIW.

It belongs to the universal ribosomal protein uS8 family. Part of the 30S ribosomal subunit. Contacts proteins S5 and S12.

One of the primary rRNA binding proteins, it binds directly to 16S rRNA central domain where it helps coordinate assembly of the platform of the 30S subunit. The chain is Small ribosomal subunit protein uS8 from Brevibacillus brevis (strain 47 / JCM 6285 / NBRC 100599).